We begin with the raw amino-acid sequence, 200 residues long: MAFTEHSPLTPHRRDLCSRSIWLARKIRSDLTALTESYVKHQGLNKNINLDSADGMPVASTDQWSELTEAERLQENLQAYRTFHVLLARLLEDQQVHFTPTEGDFHQAIHTLLLQVAAFAYQIEELMILLEYKIPRNEADGMPINVGDGGLFEKKLWGLKVLQELSQWTVRSIHDLRFISSHQTGIPARGSHYIANNKKM.

This sequence belongs to the CNTF family. Homodimer. Nervous system.

Its subcellular location is the cytoplasm. In terms of biological role, CNTF is a survival factor for various neuronal cell types. Seems to prevent the degeneration of motor axons after axotomy. The polypeptide is Ciliary neurotrophic factor (CNTF) (Homo sapiens (Human)).